Here is a 301-residue protein sequence, read N- to C-terminus: D-psicose 3-epimerase (301 aa).

Y16 is a binding site for substrate. E162 (proton donor/acceptor) is an active-site residue. Residue E162 coordinates Mn(2+). Substrate-binding positions include E168 and 195–198 (DTFH). Residues D195 and H221 each contribute to the Mn(2+) site. Position 227 (R227) interacts with substrate. E256 acts as the Proton donor/acceptor in catalysis. E256 serves as a coordination point for Mn(2+).

The protein belongs to the hyi family. In terms of assembly, homotetramer. It depends on Mn(2+) as a cofactor. Co(2+) serves as cofactor.

It catalyses the reaction D-allulose = keto-D-fructose. Completely inhibited by EDTA and partially inhibited by Zn(2+), Mg(2+) and Cu(2+). Functionally, involved in the biosynthesis of D-psicose. Catalyzes the reversible epimerization of D-fructose at the C3 position to yield D-psicose. The enzyme is highly specific for D-psicose and shows very low activity with D-tagatose. The chain is D-psicose 3-epimerase from Enterocloster bolteae (strain ATCC BAA-613 / DSM 15670 / CCUG 46953 / JCM 12243 / WAL 16351) (Clostridium bolteae).